Reading from the N-terminus, the 168-residue chain is Photosystem I assembly protein Ycf3 (168 aa).

TPR repeat units follow at residues 35–68 (AFTYYRDGMSAQSEGNYAEALQNYYEAMRLEIDP), 72–105 (SYILYNIGLIHTSNGEHTKALEYYFRALERNPFL), and 120–153 (GEQAIQQGDSEIAEAWFDQAAEYWKQAIALTPGN).

The protein belongs to the Ycf3 family.

It localises to the plastid. The protein localises to the chloroplast thylakoid membrane. In terms of biological role, essential for the assembly of the photosystem I (PSI) complex. May act as a chaperone-like factor to guide the assembly of the PSI subunits. This is Photosystem I assembly protein Ycf3 from Solanum tuberosum (Potato).